We begin with the raw amino-acid sequence, 179 residues long: Repressor of phase 1 flagellin gene (179 aa).

Functionally, transcriptional repressor of the FliC phase-1 flagellin. The polypeptide is Repressor of phase 1 flagellin gene (fljA) (Salmonella abony).